Reading from the N-terminus, the 138-residue chain is Class I hydrophobin 1 (138 aa).

Residues 1–19 (MRFSAATVSALAMALTVAA) form the signal peptide. Cystine bridges form between cysteine 45-cysteine 113, cysteine 53-cysteine 107, cysteine 54-cysteine 91, and cysteine 114-cysteine 131.

Belongs to the fungal hydrophobin family. Interacts with the lipid droplet coating protein Cap20.

It localises to the secreted. The protein localises to the lipid droplet. Its function is as follows. Aerial growth, conidiation, and dispersal of filamentous fungi in the environment rely upon a capability of their secreting small amphipathic proteins called hydrophobins (HPBs) with low sequence identity. Class I can self-assemble into an outermost layer of rodlet bundles on aerial cell surfaces, conferring cellular hydrophobicity that supports fungal growth, development and dispersal; whereas Class II form highly ordered films at water-air interfaces through intermolecular interactions but contribute nothing to the rodlet structure. Hydr1 is a class I hydrophobin involved in spore germination, appressorium formation, but not in the formation of the rodlet layer of conidia. Responsible for the full virulence on rubber tree leaves. In Colletotrichum siamense (Anthracnose fungus), this protein is Class I hydrophobin 1.